The sequence spans 113 residues: MATIRNLKIKTSTCKRIVKELHSYEKEVEREAAKTADMKDKGADPYDLKQQENVLGESRMMIPDCHKRLESALADLKSTLAELEETDEKEGPEIEDAKKTVADVEKQFPTEDA.

The interval 83 to 113 (LEETDEKEGPEIEDAKKTVADVEKQFPTEDA) is disordered. A compositionally biased stretch (basic and acidic residues) spans 89–113 (KEGPEIEDAKKTVADVEKQFPTEDA).

The protein belongs to the TBCA family. Monomer. Supercomplex made of cofactors A to E. Cofactors A and D function by capturing and stabilizing tubulin in a quasi-native conformation. Cofactor E binds to the cofactor D-tubulin complex; interaction with cofactor C then causes the release of tubulin polypeptides that are committed to the native state. Interacts with TUBB9. In terms of tissue distribution, expressed in leaves, roots, flowers and stems.

Functionally, tubulin-folding protein involved in the control of the alpha-/beta-tubulin monomer balance. Functions as a reservoir of bound and non-toxic beta-tubulin. Required in the developing embryo. This chain is Tubulin-folding cofactor A (TFCA), found in Arabidopsis thaliana (Mouse-ear cress).